Reading from the N-terminus, the 152-residue chain is MGRFIFLSSGLLVVFLSLSGTGADFQCPSEWSAYGQHCYRAFKYEKSWAEAEKFCMEQANDGHLVSIQSIKEANFVAKLVSGIIAYIWIGLRDRRKEQQCTSEWNDGSKVTYVNWREGESQMCQVLAIWSGFKNWVNTDCASHNPFVCKSPA.

Positions 1–23 are cleaved as a signal peptide; sequence MGRFIFLSSGLLVVFLSLSGTGA. Cystine bridges form between Cys-27–Cys-38, Cys-55–Cys-148, and Cys-123–Cys-140. A C-type lectin domain is found at 34–149; the sequence is YGQHCYRAFK…CASHNPFVCK (116 aa).

The protein belongs to the snaclec family. Heterodimer; disulfide-linked. In terms of tissue distribution, expressed by the venom gland.

The protein localises to the secreted. Interferes with one step of hemostasis (modulation of platelet aggregation, or coagulation cascade, for example). The sequence is that of Snaclec 5 from Bitis arietans (African puff adder).